The primary structure comprises 217 residues: ATP-dependent Clp protease proteolytic subunit 3 (217 aa).

Positions 1-13 are enriched in low complexity; sequence MSPFTAGPAPART. A disordered region spans residues 1–23; sequence MSPFTAGPAPARTPRAEEGDTPA. The Nucleophile role is filled by serine 108. Residue histidine 133 is part of the active site.

The protein belongs to the peptidase S14 family. Fourteen ClpP subunits assemble into 2 heptameric rings which stack back to back to give a disk-like structure with a central cavity, resembling the structure of eukaryotic proteasomes.

The protein localises to the cytoplasm. The enzyme catalyses Hydrolysis of proteins to small peptides in the presence of ATP and magnesium. alpha-casein is the usual test substrate. In the absence of ATP, only oligopeptides shorter than five residues are hydrolyzed (such as succinyl-Leu-Tyr-|-NHMec, and Leu-Tyr-Leu-|-Tyr-Trp, in which cleavage of the -Tyr-|-Leu- and -Tyr-|-Trp bonds also occurs).. Its function is as follows. Cleaves peptides in various proteins in a process that requires ATP hydrolysis. Has a chymotrypsin-like activity. Plays a major role in the degradation of misfolded proteins. This chain is ATP-dependent Clp protease proteolytic subunit 3, found in Streptomyces coelicolor (strain ATCC BAA-471 / A3(2) / M145).